We begin with the raw amino-acid sequence, 285 residues long: Dihydropteroate synthase (285 aa).

Positions 25-271 (TLVMGILNVT…DVKQIARMAK (247 aa)) constitute a Pterin-binding domain. Asn-32 contributes to the Mg(2+) binding site. (7,8-dihydropterin-6-yl)methyl diphosphate-binding positions include Thr-72, Asp-106, Asn-125, Asp-189, Lys-225, and 259–261 (RVH).

This sequence belongs to the DHPS family. Requires Mg(2+) as cofactor.

The catalysed reaction is (7,8-dihydropterin-6-yl)methyl diphosphate + 4-aminobenzoate = 7,8-dihydropteroate + diphosphate. It participates in cofactor biosynthesis; tetrahydrofolate biosynthesis; 7,8-dihydrofolate from 2-amino-4-hydroxy-6-hydroxymethyl-7,8-dihydropteridine diphosphate and 4-aminobenzoate: step 1/2. Functionally, catalyzes the condensation of para-aminobenzoate (pABA) with 6-hydroxymethyl-7,8-dihydropterin diphosphate (DHPt-PP) to form 7,8-dihydropteroate (H2Pte), the immediate precursor of folate derivatives. This Bacillus subtilis (strain 168) protein is Dihydropteroate synthase (sul).